The following is a 156-amino-acid chain: MPRKGHIAKRDVLPDPVYNSKVVTKFINSIMEDGKKGVAQKICYEAFELIAQRSGKEALEVFEEAMNNVMPLLEVKARRIGGATYQVPMEVRTERRQTLGIRWMLIAARKRGEKLMCERVAGELLDASNNTGAAVKKREDTHKMAEANKAFAHYRY.

It belongs to the universal ribosomal protein uS7 family. As to quaternary structure, part of the 30S ribosomal subunit. Contacts proteins S9 and S11.

Its function is as follows. One of the primary rRNA binding proteins, it binds directly to 16S rRNA where it nucleates assembly of the head domain of the 30S subunit. Is located at the subunit interface close to the decoding center, probably blocks exit of the E-site tRNA. The protein is Small ribosomal subunit protein uS7 of Clostridium botulinum (strain Alaska E43 / Type E3).